The chain runs to 217 residues: Protein LURP-one-related 2 (217 aa).

The protein belongs to the LOR family.

Might be related to the phospholipid scramblase and tubby-like superfamily of membrane tethered transcription factors. This Arabidopsis thaliana (Mouse-ear cress) protein is Protein LURP-one-related 2.